Here is a 271-residue protein sequence, read N- to C-terminus: D-methionine-binding lipoprotein MetQ (271 aa).

Residues 1 to 22 (MAFKFKTFAAVGALIGSLALVG) form the signal peptide. The N-palmitoyl cysteine moiety is linked to residue Cys-23. Cys-23 carries S-diacylglycerol cysteine lipidation.

This sequence belongs to the NlpA lipoprotein family.

It is found in the cell membrane. Its function is as follows. This protein is a component of a D-methionine permease, a binding protein-dependent, ATP-driven transport system. In Escherichia coli (strain K12), this protein is D-methionine-binding lipoprotein MetQ (metQ).